The chain runs to 147 residues: Arginine repressor (147 aa).

The protein belongs to the ArgR family.

Its subcellular location is the cytoplasm. It participates in amino-acid biosynthesis; L-arginine biosynthesis [regulation]. Regulates arginine biosynthesis genes. This is Arginine repressor from Chlamydia felis (strain Fe/C-56) (Chlamydophila felis).